Consider the following 372-residue polypeptide: Aminomethyltransferase (372 aa).

This sequence belongs to the GcvT family. In terms of assembly, the glycine cleavage system is composed of four proteins: P, T, L and H.

The catalysed reaction is N(6)-[(R)-S(8)-aminomethyldihydrolipoyl]-L-lysyl-[protein] + (6S)-5,6,7,8-tetrahydrofolate = N(6)-[(R)-dihydrolipoyl]-L-lysyl-[protein] + (6R)-5,10-methylene-5,6,7,8-tetrahydrofolate + NH4(+). Its function is as follows. The glycine cleavage system catalyzes the degradation of glycine. This is Aminomethyltransferase from Rubrobacter xylanophilus (strain DSM 9941 / JCM 11954 / NBRC 16129 / PRD-1).